The chain runs to 129 residues: Small ribosomal subunit protein uS11 (129 aa).

The protein belongs to the universal ribosomal protein uS11 family. Part of the 30S ribosomal subunit. Interacts with proteins S7 and S18. Binds to IF-3.

Functionally, located on the platform of the 30S subunit, it bridges several disparate RNA helices of the 16S rRNA. Forms part of the Shine-Dalgarno cleft in the 70S ribosome. The protein is Small ribosomal subunit protein uS11 of Haemophilus ducreyi (strain 35000HP / ATCC 700724).